The primary structure comprises 254 residues: Aspartate/glutamate leucyltransferase (254 aa).

This sequence belongs to the R-transferase family. Bpt subfamily.

The protein resides in the cytoplasm. It catalyses the reaction N-terminal L-glutamyl-[protein] + L-leucyl-tRNA(Leu) = N-terminal L-leucyl-L-glutamyl-[protein] + tRNA(Leu) + H(+). It carries out the reaction N-terminal L-aspartyl-[protein] + L-leucyl-tRNA(Leu) = N-terminal L-leucyl-L-aspartyl-[protein] + tRNA(Leu) + H(+). Functionally, functions in the N-end rule pathway of protein degradation where it conjugates Leu from its aminoacyl-tRNA to the N-termini of proteins containing an N-terminal aspartate or glutamate. This chain is Aspartate/glutamate leucyltransferase, found in Xylella fastidiosa (strain M12).